A 562-amino-acid polypeptide reads, in one-letter code: Potassium-transporting ATPase potassium-binding subunit (562 aa).

12 consecutive transmembrane segments (helical) span residues 6–26 (FLLI…LGGF), 63–83 (ALAI…LLMA), 132–152 (GLTV…FALI), 175–195 (LYVL…QGVL), 253–273 (FVQM…FGQV), 283–303 (LIWA…YAEL), 327–347 (FGIL…CGAV), 356–376 (ALGG…FGGV), 379–399 (GLYG…LMIG), 416–436 (MTAL…ALAL), 483–503 (LLLA…VLAI), and 526–546 (LFIG…FIPA).

It belongs to the KdpA family. The system is composed of three essential subunits: KdpA, KdpB and KdpC.

It localises to the cell inner membrane. In terms of biological role, part of the high-affinity ATP-driven potassium transport (or Kdp) system, which catalyzes the hydrolysis of ATP coupled with the electrogenic transport of potassium into the cytoplasm. This subunit binds the periplasmic potassium ions and delivers the ions to the membrane domain of KdpB through an intramembrane tunnel. This is Potassium-transporting ATPase potassium-binding subunit from Yersinia pseudotuberculosis serotype O:1b (strain IP 31758).